A 187-amino-acid chain; its full sequence is Cytochrome b-245 chaperone 1 (187 aa).

A helical transmembrane segment spans residues 20–42; that stretch reads GIRSWSLLVGILSIGLAAAYYSG. Phosphoserine is present on serine 168.

The protein belongs to the CYBC1 family. In terms of assembly, interacts with CYBB; CYBC1 may act as a chaperone stabilizing Cytochrome b-245 heterodimer.

The protein resides in the endoplasmic reticulum membrane. Its function is as follows. Functions as a chaperone necessary for a stable expression of the CYBA and CYBB subunits of the cytochrome b-245 heterodimer. Controls the phagocyte respiratory burst and is essential for innate immunity. This Bos taurus (Bovine) protein is Cytochrome b-245 chaperone 1.